The primary structure comprises 336 residues: F420-dependent glucose-6-phosphate dehydrogenase (336 aa).

Aspartate 39 is a binding site for coenzyme F420-(gamma-Glu)n. Catalysis depends on histidine 40, which acts as the Proton donor. Coenzyme F420-(gamma-Glu)n contacts are provided by residues threonine 76 and 107–108; that span reads TG. The Proton acceptor role is filled by glutamate 109. Residues asparagine 112, 177–178, and 180–181 each bind coenzyme F420-(gamma-Glu)n; these read GG and LV. Positions 195, 198, 259, and 283 each coordinate substrate.

The protein belongs to the F420-dependent glucose-6-phosphate dehydrogenase family. Homodimer.

It carries out the reaction oxidized coenzyme F420-(gamma-L-Glu)(n) + D-glucose 6-phosphate + H(+) = 6-phospho-D-glucono-1,5-lactone + reduced coenzyme F420-(gamma-L-Glu)(n). Its function is as follows. Catalyzes the coenzyme F420-dependent oxidation of glucose 6-phosphate (G6P) to 6-phosphogluconolactone. The chain is F420-dependent glucose-6-phosphate dehydrogenase from Nocardia farcinica (strain IFM 10152).